Reading from the N-terminus, the 605-residue chain is uncharacterized protein (605 aa).

The tract at residues Phe-22 to Glu-93 is disordered. Residues Ser-46–Ser-57 show a composition bias toward low complexity.

This is an uncharacterized protein from Treponema pallidum (strain Nichols).